A 956-amino-acid chain; its full sequence is Zinc protease PQQL-like (956 aa).

An N-acetylmethionine modification is found at methionine 1. Histidine 85 contacts Zn(2+). Glutamate 88 functions as the Proton acceptor in the catalytic mechanism. Zn(2+) is bound at residue histidine 89. Glutamate 165 is an active-site residue. Glutamate 172 serves as a coordination point for Zn(2+).

The protein belongs to the peptidase M16 family. The cofactor is Zn(2+).

The chain is Zinc protease PQQL-like from Arabidopsis thaliana (Mouse-ear cress).